Here is an 85-residue protein sequence, read N- to C-terminus: MAHKKGASSTRNGRDSNAQRLGVKRFGGQTVNAGEILVRQRGTHFHPGANVGRGGDDTLFALAAGSVEFGAKGGRKVVNIVAVEA.

The disordered stretch occupies residues 1–22; sequence MAHKKGASSTRNGRDSNAQRLG. Polar residues predominate over residues 7-19; it reads ASSTRNGRDSNAQ.

The protein belongs to the bacterial ribosomal protein bL27 family.

This chain is Large ribosomal subunit protein bL27, found in Leifsonia xyli subsp. xyli (strain CTCB07).